Reading from the N-terminus, the 98-residue chain is Integration host factor subunit alpha (98 aa).

The tract at residues 51 to 71 (NFDLRDKNERPGRNPKTGEDI) is disordered. A compositionally biased stretch (basic and acidic residues) spans 53 to 69 (DLRDKNERPGRNPKTGE).

It belongs to the bacterial histone-like protein family. Heterodimer of an alpha and a beta chain.

This protein is one of the two subunits of integration host factor, a specific DNA-binding protein that functions in genetic recombination as well as in transcriptional and translational control. This Vibrio parahaemolyticus serotype O3:K6 (strain RIMD 2210633) protein is Integration host factor subunit alpha.